The following is a 274-amino-acid chain: NAD(P)H dehydrogenase [quinone] 1 (274 aa).

FAD contacts are provided by residues His-12, 18–19 (FN), and Gln-67. A Phosphoserine modification is found at Ser-82. Position 104–107 (104–107 (LQWF)) interacts with FAD. Substrate is bound at residue 126 to 128 (AYT). Residues 148–151 (TTGG), Tyr-156, and Arg-201 contribute to the FAD site. An important for apoenzyme conformational stability region spans residues 225 to 274 (PSSLFDLNFQAGFLMKKEVQDEEKNKKFGLSVGHHLGKSIPTDNQIKARK). Glycyl lysine isopeptide (Lys-Gly) (interchain with G-Cter in SUMO2) cross-links involve residues Lys-250 and Lys-251.

The protein belongs to the NAD(P)H dehydrogenase (quinone) family. Homodimer. Interacts with PDLIM4 isoform 2; this interaction stabilizes PDLIM4 isoform 2 in response to oxidative stress and protects it from ubiquitin-independent degradation by the core 20S proteasome. Interacts with TP73 (via SAM domain); this interaction is NADH-dependent, stabilizes TP73 in response to oxidative stress and protects it from ubiquitin-independent degradation by the 20S proteasome. Interacts with TP53; this interaction is NADH-dependent, stabilizes TP53 in response to oxidative stress and protects it from ubiquitin-independent degradation by the 20S proteasome. FAD is required as a cofactor.

Its subcellular location is the cytoplasm. It is found in the cytosol. The enzyme catalyses a quinone + NADH + H(+) = a quinol + NAD(+). The catalysed reaction is a quinone + NADPH + H(+) = a quinol + NADP(+). It catalyses the reaction ubiquinone-10 + NADH + H(+) = ubiquinol-10 + NAD(+). It carries out the reaction menadione + NADH + H(+) = menadiol + NAD(+). Functionally, flavin-containing quinone reductase that catalyzes two-electron reduction of quinones to hydroquinones using either NADH or NADPH as electron donors. In a ping-pong kinetic mechanism, the electrons are sequentially transferred from NAD(P)H to flavin cofactor and then from reduced flavin to the quinone, bypassing the formation of semiquinone and reactive oxygen species. Regulates cellular redox state primarily through quinone detoxification. Reduces components of plasma membrane redox system such as coenzyme Q and vitamin quinones, producing antioxidant hydroquinone forms. In the process may function as superoxide scavenger to prevent hydroquinone oxidation and facilitate excretion. Alternatively, can activate quinones and their derivatives by generating redox reactive hydroquinones with DNA cross-linking antitumor potential. Acts as a gatekeeper of the core 20S proteasome known to degrade proteins with unstructured regions. Upon oxidative stress, interacts with tumor suppressors TP53 and TP73 in a NADH-dependent way and inhibits their ubiquitin-independent degradation by the 20S proteasome. In Pongo abelii (Sumatran orangutan), this protein is NAD(P)H dehydrogenase [quinone] 1 (NQO1).